We begin with the raw amino-acid sequence, 269 residues long: Glutamate racemase (269 aa).

Residues 14–15 (DS) and 46–47 (YS) each bind substrate. Catalysis depends on cysteine 78, which acts as the Proton donor/acceptor. Substrate is bound at residue 79–80 (NT). The active-site Proton donor/acceptor is the cysteine 189. 190–191 (TH) lines the substrate pocket.

The protein belongs to the aspartate/glutamate racemases family.

The catalysed reaction is L-glutamate = D-glutamate. It participates in cell wall biogenesis; peptidoglycan biosynthesis. Provides the (R)-glutamate required for cell wall biosynthesis. This is Glutamate racemase from Haemophilus influenzae (strain PittGG).